The primary structure comprises 227 residues: Heptaprenylglyceryl phosphate synthase (227 aa).

Lys13 contacts sn-glycerol 1-phosphate. The Mg(2+) site is built by Asp15 and Thr41. Sn-glycerol 1-phosphate contacts are provided by residues 159–164 (YLEYSG), Gly189, and 209–210 (GN).

It belongs to the GGGP/HepGP synthase family. Group I subfamily. Homodimer. Mg(2+) is required as a cofactor.

The catalysed reaction is sn-glycerol 1-phosphate + all-trans-heptaprenyl diphosphate = 3-heptaprenyl-sn-glycero-1-phosphate + diphosphate. It participates in membrane lipid metabolism; glycerophospholipid metabolism. Its function is as follows. Prenyltransferase that catalyzes in vivo the transfer of the heptaprenyl moiety of heptaprenyl pyrophosphate (HepPP; 35 carbon atoms) to the C3 hydroxyl of sn-glycerol-1-phosphate (G1P), producing heptaprenylglyceryl phosphate (HepGP). This reaction is an ether-bond-formation step in the biosynthesis of archaea-type G1P-based membrane lipids found in Bacillales. This chain is Heptaprenylglyceryl phosphate synthase, found in Exiguobacterium sibiricum (strain DSM 17290 / CCUG 55495 / CIP 109462 / JCM 13490 / 255-15).